The chain runs to 388 residues: F-box protein At3g49510 (388 aa).

The F-box domain occupies 1–47; the sequence is MTTISDLSDDLVGDILSRVPFTSLISVRSTCKKWNALSKNQIFGRKT.

The protein is F-box protein At3g49510 of Arabidopsis thaliana (Mouse-ear cress).